Reading from the N-terminus, the 897-residue chain is Protein translocase subunit SecA (897 aa).

Residues Gln-89, 107–111 (GEGKT), and Asp-517 contribute to the ATP site. A compositionally biased stretch (polar residues) spans 839-856 (DDAQATHSNPNEQTKQAS). Residues 839-897 (DDAQATHSNPNEQTKQASITNNIQTQTDQQNTYQRKEKKVGRNEPCPCGSGKKYKKCHG) are disordered. A compositionally biased stretch (low complexity) spans 857–870 (ITNNIQTQTDQQNT). Residues Cys-884, Cys-886, Cys-895, and His-896 each contribute to the Zn(2+) site.

The protein belongs to the SecA family. As to quaternary structure, monomer and homodimer. Part of the essential Sec protein translocation apparatus which comprises SecA, SecYEG and auxiliary proteins SecDF-YajC and YidC. Zn(2+) serves as cofactor.

It is found in the cell inner membrane. It localises to the cytoplasm. The catalysed reaction is ATP + H2O + cellular proteinSide 1 = ADP + phosphate + cellular proteinSide 2.. Its function is as follows. Part of the Sec protein translocase complex. Interacts with the SecYEG preprotein conducting channel. Has a central role in coupling the hydrolysis of ATP to the transfer of proteins into and across the cell membrane, serving as an ATP-driven molecular motor driving the stepwise translocation of polypeptide chains across the membrane. The protein is Protein translocase subunit SecA of Vesicomyosocius okutanii subsp. Calyptogena okutanii (strain HA).